Consider the following 204-residue polypeptide: Pectinesterase inhibitor 9 (204 aa).

A signal peptide spans 1–23 (MELKNTIFLVILLSITILQSSSA). A glycan (N-linked (GlcNAc...) asparagine) is linked at Asn-26. 2 cysteine pairs are disulfide-bonded: Cys-38/Cys-47 and Cys-106/Cys-157.

This sequence belongs to the PMEI family. Binds reversibly to PME3 to inhibit its activity; the stability of the PME3-PMEI9 complex and the inhibition of the pectin methylesterase (PME) activity is pH-dependent, based on protonation status of amino-acids at the complex interface. In terms of tissue distribution, highly expressed in roots and etiolated hypocotyls. Expressed in seedlings, leaves, stems, siliques, floral buds and mature seeds.

Its subcellular location is the secreted. It is found in the extracellular space. The protein resides in the apoplast. Its function is as follows. Pectin methylesterase (PME) inhibitor that probably targets root-expressed PME and PME3 in a moderate pH-dependent manner, mainly in slightly acidic conditions (pH 6.3 and 5.0) and to some extent at pH 7.5; this processus relies on changes in the protonation of amino acids involved in intermolecular and intramolecular interactions. Regulates de-methylesterification of pectins in roots and affects root growth. This chain is Pectinesterase inhibitor 9, found in Arabidopsis thaliana (Mouse-ear cress).